The primary structure comprises 292 residues: Ribosomal protein L11 methyltransferase (292 aa).

S-adenosyl-L-methionine is bound by residues T144, G165, D187, and N229.

This sequence belongs to the methyltransferase superfamily. PrmA family.

It localises to the cytoplasm. The enzyme catalyses L-lysyl-[protein] + 3 S-adenosyl-L-methionine = N(6),N(6),N(6)-trimethyl-L-lysyl-[protein] + 3 S-adenosyl-L-homocysteine + 3 H(+). Functionally, methylates ribosomal protein L11. The chain is Ribosomal protein L11 methyltransferase from Pseudomonas savastanoi pv. phaseolicola (strain 1448A / Race 6) (Pseudomonas syringae pv. phaseolicola (strain 1448A / Race 6)).